The chain runs to 183 residues: Holliday junction branch migration complex subunit RuvA (183 aa).

Positions Met-1–Leu-64 are domain I. The domain II stretch occupies residues Asp-65–Ser-139. Position 139 (Ser-139) is a region of interest, flexible linker. The tract at residues Ser-139 to Arg-183 is domain III.

Belongs to the RuvA family. Homotetramer. Forms an RuvA(8)-RuvB(12)-Holliday junction (HJ) complex. HJ DNA is sandwiched between 2 RuvA tetramers; dsDNA enters through RuvA and exits via RuvB. An RuvB hexamer assembles on each DNA strand where it exits the tetramer. Each RuvB hexamer is contacted by two RuvA subunits (via domain III) on 2 adjacent RuvB subunits; this complex drives branch migration. In the full resolvosome a probable DNA-RuvA(4)-RuvB(12)-RuvC(2) complex forms which resolves the HJ.

It is found in the cytoplasm. Its function is as follows. The RuvA-RuvB-RuvC complex processes Holliday junction (HJ) DNA during genetic recombination and DNA repair, while the RuvA-RuvB complex plays an important role in the rescue of blocked DNA replication forks via replication fork reversal (RFR). RuvA specifically binds to HJ cruciform DNA, conferring on it an open structure. The RuvB hexamer acts as an ATP-dependent pump, pulling dsDNA into and through the RuvAB complex. HJ branch migration allows RuvC to scan DNA until it finds its consensus sequence, where it cleaves and resolves the cruciform DNA. This is Holliday junction branch migration complex subunit RuvA from Campylobacter jejuni subsp. doylei (strain ATCC BAA-1458 / RM4099 / 269.97).